Consider the following 132-residue polypeptide: Histone H2A-alpha (132 aa).

The residue at position 2 (Ser-2) is an N-acetylserine. N6-acetyllysine occurs at positions 5 and 9. At Gln-106 the chain carries N5-methylglutamine. Ser-129 carries the phosphoserine modification. Residues 129–130 carry the [ST]-Q motif motif; it reads SQ.

It belongs to the histone H2A family. The nucleosome is a histone octamer containing two molecules each of H2A, H2B, H3 and H4 assembled in one H3-H4 heterotetramer and two H2A-H2B heterodimers. The octamer wraps approximately 147 bp of DNA. Interacts with mdb1 (via BRCT domain) in vitro; this interaction requires phosphorylation of this protein at the S/T-Q motif. In terms of processing, phosphorylated to form H2AS128ph (gamma-H2A) in response to DNA double-strand breaks (DSBs) generated by exogenous genotoxic agents and by stalled replication forks. Phosphorylation is dependent on the DNA damage checkpoint kinases rad3/ATR and tel1/ATM, spreads on either side of a detected DSB site and may mark the surrounding chromatin for recruitment of proteins required for DNA damage signaling and repair. Gamma-H2A is required for recruiting crb2, a modulator of DNA damage checkpoint signaling, to DSB sites. Gamma-H2A is removed from the DNA prior to the strand invasion-primer extension step of the repair process and subsequently dephosphorylated. Dephosphorylation is necessary for efficient recovery from the DNA damage checkpoint. Post-translationally, acetylated by esa1 to form H2AK4ac and H2AK7ac.

It is found in the nucleus. The protein resides in the chromosome. Its function is as follows. Core component of nucleosome which plays a central role in DNA double strand break (DSB) repair. Nucleosomes wrap and compact DNA into chromatin, limiting DNA accessibility to the cellular machineries which require DNA as a template. Histones thereby play a central role in transcription regulation, DNA repair, DNA replication and chromosomal stability. DNA accessibility is regulated via a complex set of post-translational modifications of histones, also called histone code, and nucleosome remodeling. The sequence is that of Histone H2A-alpha (hta1) from Schizosaccharomyces pombe (strain 972 / ATCC 24843) (Fission yeast).